We begin with the raw amino-acid sequence, 744 residues long: Prestin (744 aa).

At 1–75 (MDHAEENEIL…PITKWLPAYK (75 aa)) the chain is on the cytoplasmic side. The chain crosses the membrane as a helical span at residues 76–105 (FKEYVLGDLVSGISTGVLQLPQGLAFAMLA). Residues 106–108 (AVP) are Extracellular-facing. Residues 109–126 (PIFGLYSSFYPVIMYCFL) form a helical membrane-spanning segment. Residues 127–137 (GTSRHISIGPF) are Cytoplasmic-facing. The helical transmembrane segment at 138–151 (AVISLMIGGVAVRL) threads the bilayer. Over 152–168 (VPDDIVIPGGVNATNGT) the chain is Extracellular. Positions 158-168 (IPGGVNATNGT) match the Involved in motor function motif. N163 and N166 each carry an N-linked (GlcNAc...) asparagine glycan. A helical transmembrane segment spans residues 169–196 (EARDALRVKVAMSVTLLSGIIQFCLGVC). Residues 197-206 (RFGFVAIYLT) lie on the Cytoplasmic side of the membrane. The helical transmembrane segment at 207–230 (EPLVRGFTTAAAVHVFTSMLKYLF) threads the bilayer. Topologically, residues 231-241 (GVKTKRYSGIF) are extracellular. An intramembrane region (helical) is located at residues 242–253 (SVVYSTVAVLQN). At 254–258 (VKNLN) the chain is on the extracellular side. The helical transmembrane segment at 259-282 (VCSLGVGLMVFGLLLGGKEFNERF) threads the bilayer. The Cytoplasmic portion of the chain corresponds to 283–291 (KEKLPAPIP). Residues 292–307 (LEFFAVVMGTGISAGF) form a helical membrane-spanning segment. The Extracellular segment spans residues 308 to 332 (NLKESYNVDVVGTLPLGLLPPANPD). The chain crosses the membrane as a helical span at residues 333-367 (TSLFHLVYVDAIAIAIVGFSVTISMAKTLANKHGY). The Cytoplasmic segment spans residues 368–370 (QVD). Residues 371-388 (GNQELIALGLCNSIGSLF) form a helical membrane-spanning segment. The Extracellular portion of the chain corresponds to 389–396 (QTFSISCS). A helical membrane pass occupies residues 397–406 (LSRSLVQEGT). S398 is a salicylate binding site. Over 407–410 (GGKT) the chain is Cytoplasmic. A helical membrane pass occupies residues 411 to 432 (QLAGCLASLMILLVILATGFLF). Over 433 to 436 (ESLP) the chain is Extracellular. Residues 437 to 464 (QAVLSAIVIVNLKGMFMQFSDLPFFWRT) traverse the membrane as a helical segment. Position 465 (S465) is a topological domain, cytoplasmic. Residues 466-481 (KIELTIWLTTFVSSLF) form a helical membrane-spanning segment. Residues 482–483 (LG) lie on the Extracellular side of the membrane. The chain crosses the membrane as a helical span at residues 484–504 (LDYGLITAVIIALLTVIYRTQ). An extended region for STAS domain region spans residues 505 to 718 (SPSYKVLGKL…AVLGSQLREA (214 aa)). Residues 505–744 (SPSYKVLGKL…PNATPATPEA (240 aa)) are Cytoplasmic-facing. An STAS domain is found at 525–713 (AYEEVKEIPG…HSIHDAVLGS (189 aa)). The tract at residues 718 to 744 (ALAEQEASAPPSQEDLEPNATPATPEA) is disordered.

It belongs to the SLC26A/SulP transporter (TC 2.A.53) family. In terms of assembly, homodimer. Interacts (via STAS domain) with CALM; this interaction is calcium-dependent and the STAS domain interacts with only one lobe of CALM which is an elongated conformation. Interacts with MYH1.

The protein resides in the lateral cell membrane. It carries out the reaction 2 hydrogencarbonate(in) + chloride(out) = 2 hydrogencarbonate(out) + chloride(in). Functionally, voltage-sensitive motor protein that drives outer hair cell (OHC) electromotility (eM) and participates in sound amplification in the hearing organ. Converts changes in the transmembrane electric potential into mechanical displacements resulting in the coupling of its expansion to movement of a charged voltage sensor across the lipid membrane. The nature of the voltage sensor is not completely clear, and two models compete. In the first model, acts as an incomplete transporter where intracellular chloride anion acts as extrinsic voltage sensor that drives conformational change in the protein which is sufficient to produce a length change in the plane of the membrane and hence in the length of the OHC. The second model in which multiple charged amino acid residues are distributed at the intracellular and extracellular membrane interfaces that form an intrinsic voltage sensor, whose movement produces the non-linear capacitance (NLC). However, the effective voltage sensor may be the result of a hybrid voltage sensor, assembled from intrinsic charge (charged residues) and extrinsic charge (bound anion). Notably, binding of anions to the anion-binding pocket partially neutralizes the intrinsic positive charge rather than to form an electrically negative sensor, therefore remaining charge may serve as voltage sensor that, after depolarization, moves from down (expanded state) to up (contracted) conformation, which is accompanied by an eccentric contraction of the intermembrane cross-sectional area of the protein as well as a major increase in the hydrophobic thickness of the protein having as consequences the plasma membrane thickening and the cell contraction after membrane depolarization. The anion-binding pocket transits from the inward-open (Down) state, where it is exposed toward the intracellular solvent in the absence of anion, to the occluded (Up) state upon anion binding. Salicylate competes for the anion-binding site and inhibits the voltage-sensor movement, and therefore inhibits the charge transfer and electromotility by displacing Cl(-) from the anion-binding site and by preventing the structural transitions to the contracted state. In addition, can act as a weak Cl(-)/HCO3(-) antiporter across the cell membrane and so regulate the intracellular pH of the outer hair cells (OHCs), while firstly found as being unable to mediate electrogenic anion transport. Moreover, supports a role in cardiac mechanical amplification serving as an elastic element to enhance the actomyosin- based sarcomere contraction system. The chain is Prestin from Homo sapiens (Human).